Here is a 156-residue protein sequence, read N- to C-terminus: Cyclic pyranopterin monophosphate synthase (156 aa).

Substrate-binding positions include 73 to 75 (LCH) and 110 to 111 (ME). Asp125 is an active-site residue.

The protein belongs to the MoaC family. In terms of assembly, homohexamer; trimer of dimers.

It catalyses the reaction (8S)-3',8-cyclo-7,8-dihydroguanosine 5'-triphosphate = cyclic pyranopterin phosphate + diphosphate. The protein operates within cofactor biosynthesis; molybdopterin biosynthesis. Its function is as follows. Catalyzes the conversion of (8S)-3',8-cyclo-7,8-dihydroguanosine 5'-triphosphate to cyclic pyranopterin monophosphate (cPMP). The chain is Cyclic pyranopterin monophosphate synthase from Pseudomonas putida (strain GB-1).